Consider the following 410-residue polypeptide: Voltage-dependent chloride channel 2, chloroplastic (410 aa).

The Lumenal, thylakoid segment spans residues 1-110; sequence MYQSMNLSFS…RHVSSSPSSR (110 aa). The chain crosses the membrane as a helical span at residues 111 to 131; that stretch reads VILSLIPPVFFFTTVAILIAG. Residues 132 to 147 lie on the Stromal side of the membrane; it reads YNSAVDLDWLPDFFPV. Residues 148–168 traverse the membrane as a helical segment; it reads LRASPLPYQLTAPALALLLVF. At 169–315 the chain is on the lumenal, thylakoid side; the sequence is RTEASYSRFE…PLSYTRLTSR (147 aa). Helical transmembrane passes span 316 to 336 and 337 to 357; these read FLVL…HWNV and VPAT…GVLI. The Lumenal, thylakoid portion of the chain corresponds to 358–410; that stretch reads EEPFSMLALDELCAMVLSNSDEAVESKEVIRNRIIAKKRILEIKHSSNGWHKS.

The protein belongs to the anion channel-forming bestrophin (TC 1.A.46) family. Voltage-dependent chloride channel subfamily. As to expression, mostly expressed in flowers and, to a lower extent, in leaves, stems and roots.

The protein resides in the plastid. It is found in the chloroplast thylakoid membrane. The catalysed reaction is chloride(in) = chloride(out). Its function is as follows. Voltage-dependent chloride (Cl) channel probably contributing to proton motive force (PMF) partitioning across the thylakoid membrane by anion influx into the lumen. Influences thylakoid ultrastructure, including lumen size and organization. The protein is Voltage-dependent chloride channel 2, chloroplastic of Arabidopsis thaliana (Mouse-ear cress).